We begin with the raw amino-acid sequence, 2571 residues long: Highly reducing polyketide synthase 19 (2571 aa).

The tract at residues 1–51 is disordered; that stretch reads MSPIFLGDSEDAATCRCGPPSSPSPELSGTETALTSDSDGPELLNPGPQGP. The span at 27–38 shows a compositional bias: polar residues; the sequence is LSGTETALTSDS. In terms of domain architecture, Ketosynthase family 3 (KS3) spans 51 to 485; the sequence is PEPIAIIGMG…GANAHCILES (435 aa). Active-site for beta-ketoacyl synthase activity residues include Cys-224, His-359, and His-398. Residues 609–932 form a malonyl-CoA:ACP transacylase (MAT) domain region; sequence VFTGQGAQWA…PYNSALLRGK (324 aa). Residue Ser-701 is the For malonyltransferase activity of the active site. An N-terminal hotdog fold region spans residues 1019-1163; the sequence is HDLLGSRVPG…GLVKLTQNED (145 aa). A dehydratase (DH) domain region spans residues 1019 to 1340; that stretch reads HDLLGSRVPG…SGCRMVPYSS (322 aa). The 326-residue stretch at 1019-1344 folds into the PKS/mFAS DH domain; it reads HDLLGSRVPG…MVPYSSGTAV (326 aa). Residue His-1051 is the Proton acceptor; for dehydratase activity of the active site. The segment at 1177 to 1344 is C-terminal hotdog fold; the sequence is MEQSAPRTWY…MVPYSSGTAV (168 aa). Asp-1241 acts as the Proton donor; for dehydratase activity in catalysis. Residues 1800 to 2140 form an enoyl reductase (ER) domain region; it reads NMSDAFVFTR…AFRALSGSTT (341 aa). Residues 2177-2355 are ketoreductase (KR) domain; it reads SYLLVGCLGG…ATSVGLGMIS (179 aa). In terms of domain architecture, Carrier spans 2490-2568; the sequence is AVAAQALELV…MLSELIAGKL (79 aa). An O-(pantetheine 4'-phosphoryl)serine modification is found at Ser-2527.

It participates in polyketide biosynthesis. In terms of biological role, highly reducing polyketide synthase; part of the gene cluster that mediates the biosynthesis of pyriculol and pyriculariol, two heptaketides that induce lesion formation upon application on rice leaves but are dispensable for pathogenicity. The highly reducing polyketide synthase synthesizes the heptaketide backbone of pyriculol and pyriculariol. Pyriculol and pyriculariol contain several hydroxyl moieties and double bonds, so it can be assumed that several reduction steps occur during biosynthesis. These reactions could be executed by PKS19 itself or partly by the tailoring enzymes OXR1, PXR2, RED1, RED2 or RED3, identified within the cluster. The FAD-linked oxidoreductase OXR1 is the only tailoring enzyme for which the function has been determined yet, and is involved in the oxidation of dihydropyriculol and dihydropyriculariol into pyriculol and pyriculariol, respectively. This chain is Highly reducing polyketide synthase 19, found in Pyricularia oryzae (strain 70-15 / ATCC MYA-4617 / FGSC 8958) (Rice blast fungus).